Here is a 287-residue protein sequence, read N- to C-terminus: 2-dehydro-3-deoxyphosphooctonate aldolase (287 aa).

This sequence belongs to the KdsA family.

The protein localises to the cytoplasm. The enzyme catalyses D-arabinose 5-phosphate + phosphoenolpyruvate + H2O = 3-deoxy-alpha-D-manno-2-octulosonate-8-phosphate + phosphate. The protein operates within carbohydrate biosynthesis; 3-deoxy-D-manno-octulosonate biosynthesis; 3-deoxy-D-manno-octulosonate from D-ribulose 5-phosphate: step 2/3. It functions in the pathway bacterial outer membrane biogenesis; lipopolysaccharide biosynthesis. The polypeptide is 2-dehydro-3-deoxyphosphooctonate aldolase (Nitrobacter winogradskyi (strain ATCC 25391 / DSM 10237 / CIP 104748 / NCIMB 11846 / Nb-255)).